A 468-amino-acid chain; its full sequence is Zinc finger protein 672 (468 aa).

4 consecutive C2H2-type zinc fingers follow at residues 15 to 37 (YSCSVCGKSFQYSAVLLRHERAH), 43 to 65 (FRCLECGERCARASDLRVHRWTH), 71 to 93 (YICSECGQSFSHSSLLDLHLGTH), and 100 to 123 (CPCRLCGRRFPHVSALLLHRVRQH). The C2H2-type 5; degenerate zinc finger occupies 129 to 151 (HRCPLCARSFRQSALPFHLARAH). 9 C2H2-type zinc fingers span residues 167 to 189 (YHCTQCPRAFHSSAGLRNHSRIH), 202 to 224 (HRCGVCGKSFSKSSTLTRHLQRH), 230 to 252 (FKCPECGKGFLESATLVRHQRTH), 258 to 280 (YACNDCGRCFSESSTLLRHQRSH), 286 to 308 (HICATCGKGFGQRYDLVVHQRSH), 314 to 336 (FPCPECGRGFTDRSDLTKHLRTH), 342 to 364 (YHCELCGKRFTCISNLNVHLRNH), 370 to 392 (HKCPECGKSFSVASKLALHRKTH), and 398 to 420 (AECTECGKFFSHGRSLSQHQRSH).

This sequence belongs to the krueppel C2H2-type zinc-finger protein family.

Its subcellular location is the nucleus. Its function is as follows. May be involved in transcriptional regulation. The protein is Zinc finger protein 672 (Znf672) of Rattus norvegicus (Rat).